The following is a 406-amino-acid chain: Phloroisovalerophenone synthase (406 aa).

Cysteine 171 is an active-site residue.

The protein belongs to the thiolase-like superfamily. Chalcone/stilbene synthases family.

The catalysed reaction is 3-methylbutanoyl-CoA + 3 malonyl-CoA + 3 H(+) = phlorisovalerophenone + 3 CO2 + 4 CoA. Produces 3-methyl-1-(2,4,6-trihydroxyphenyl)butan-1-one (phloroisovalerophenone). The sequence is that of Phloroisovalerophenone synthase (VPS) from Psilotum nudum (Whisk fern).